Consider the following 388-residue polypeptide: Succinate--CoA ligase [ADP-forming] subunit beta (388 aa).

Residues Lys-9 to Glu-244 form the ATP-grasp domain. ATP is bound by residues Lys-46, Gly-53–Gly-55, Glu-99, Val-102, and Glu-107. Mg(2+) contacts are provided by Asn-199 and Asp-213. Substrate-binding positions include Asn-264 and Gly-321–Leu-323.

Belongs to the succinate/malate CoA ligase beta subunit family. In terms of assembly, heterotetramer of two alpha and two beta subunits. Mg(2+) serves as cofactor.

The enzyme catalyses succinate + ATP + CoA = succinyl-CoA + ADP + phosphate. The catalysed reaction is GTP + succinate + CoA = succinyl-CoA + GDP + phosphate. It participates in carbohydrate metabolism; tricarboxylic acid cycle; succinate from succinyl-CoA (ligase route): step 1/1. Its function is as follows. Succinyl-CoA synthetase functions in the citric acid cycle (TCA), coupling the hydrolysis of succinyl-CoA to the synthesis of either ATP or GTP and thus represents the only step of substrate-level phosphorylation in the TCA. The beta subunit provides nucleotide specificity of the enzyme and binds the substrate succinate, while the binding sites for coenzyme A and phosphate are found in the alpha subunit. This chain is Succinate--CoA ligase [ADP-forming] subunit beta, found in Desulfosudis oleivorans (strain DSM 6200 / JCM 39069 / Hxd3) (Desulfococcus oleovorans).